The chain runs to 362 residues: UDP-N-acetylglucosamine--N-acetylmuramyl-(pentapeptide) pyrophosphoryl-undecaprenol N-acetylglucosamine transferase (362 aa).

3 residues coordinate UDP-N-acetyl-alpha-D-glucosamine: R166, S196, and Q290.

It belongs to the glycosyltransferase 28 family. MurG subfamily.

It localises to the cell membrane. It carries out the reaction Mur2Ac(oyl-L-Ala-gamma-D-Glu-L-Lys-D-Ala-D-Ala)-di-trans,octa-cis-undecaprenyl diphosphate + UDP-N-acetyl-alpha-D-glucosamine = beta-D-GlcNAc-(1-&gt;4)-Mur2Ac(oyl-L-Ala-gamma-D-Glu-L-Lys-D-Ala-D-Ala)-di-trans,octa-cis-undecaprenyl diphosphate + UDP + H(+). It participates in cell wall biogenesis; peptidoglycan biosynthesis. Its function is as follows. Cell wall formation. Catalyzes the transfer of a GlcNAc subunit on undecaprenyl-pyrophosphoryl-MurNAc-pentapeptide (lipid intermediate I) to form undecaprenyl-pyrophosphoryl-MurNAc-(pentapeptide)GlcNAc (lipid intermediate II). This chain is UDP-N-acetylglucosamine--N-acetylmuramyl-(pentapeptide) pyrophosphoryl-undecaprenol N-acetylglucosamine transferase, found in Staphylococcus carnosus (strain TM300).